Here is a 123-residue protein sequence, read N- to C-terminus: UPF0738 protein BALH_1059 (123 aa).

It belongs to the UPF0738 family.

This chain is UPF0738 protein BALH_1059, found in Bacillus thuringiensis (strain Al Hakam).